The primary structure comprises 337 residues: Anthranilate phosphoribosyltransferase (337 aa).

5-phospho-alpha-D-ribose 1-diphosphate-binding positions include G79, 82–83 (GD), T87, 89–92 (NVST), 107–115 (KHGNRSVSS), and S119. Position 79 (G79) interacts with anthranilate. S91 lines the Mg(2+) pocket. N110 lines the anthranilate pocket. R165 provides a ligand contact to anthranilate. Mg(2+) is bound by residues D223 and E224.

It belongs to the anthranilate phosphoribosyltransferase family. Homodimer. Requires Mg(2+) as cofactor.

It catalyses the reaction N-(5-phospho-beta-D-ribosyl)anthranilate + diphosphate = 5-phospho-alpha-D-ribose 1-diphosphate + anthranilate. It participates in amino-acid biosynthesis; L-tryptophan biosynthesis; L-tryptophan from chorismate: step 2/5. Functionally, catalyzes the transfer of the phosphoribosyl group of 5-phosphorylribose-1-pyrophosphate (PRPP) to anthranilate to yield N-(5'-phosphoribosyl)-anthranilate (PRA). The protein is Anthranilate phosphoribosyltransferase of Aeromonas salmonicida (strain A449).